Here is a 168-residue protein sequence, read N- to C-terminus: uncharacterized protein (168 aa).

The helical transmembrane segment at 23-47 (LFARASIIGVALLLSACATVPMASV) threads the bilayer.

The protein resides in the membrane. This is an uncharacterized protein from Haemophilus influenzae (strain ATCC 51907 / DSM 11121 / KW20 / Rd).